A 330-amino-acid polypeptide reads, in one-letter code: Methionyl-tRNA formyltransferase (330 aa).

112–115 (SLLP) contacts (6S)-5,6,7,8-tetrahydrofolate.

The protein belongs to the Fmt family.

It catalyses the reaction L-methionyl-tRNA(fMet) + (6R)-10-formyltetrahydrofolate = N-formyl-L-methionyl-tRNA(fMet) + (6S)-5,6,7,8-tetrahydrofolate + H(+). Functionally, attaches a formyl group to the free amino group of methionyl-tRNA(fMet). The formyl group appears to play a dual role in the initiator identity of N-formylmethionyl-tRNA by promoting its recognition by IF2 and preventing the misappropriation of this tRNA by the elongation apparatus. The polypeptide is Methionyl-tRNA formyltransferase (Synechococcus sp. (strain RCC307)).